The following is a 319-amino-acid chain: MARKKIALVGSGNIGGTLAHLIGLKELGDVVMFDIAEGIPQGKGLDILESTPVEGVDCRYSGANDYSAIAGADVVIVTAGVPRKPGMSRDDLVGINLKVMAAVGEGIKKNCPGAFVICITNPLDVMVWALQHYSGVPANMIVGMAGVLDSARFRTFLCEEFNVSVEDVTAFVLGGHGDTMVPLVRYSTVAGIPLPDLVKMGWTTQEKLDQIVQRTRDGGAEIVNLLKTGSAYYAPAASGVAMAEAFLKDKKRVLPVATLVKGGTYGQPDDVFVGVPVVIGEGGVERIVEIELNAAEQAEFNKSADAVRGLVKVAKGLMG.

Residues 10–15 (GSGNIG) and Asp34 contribute to the NAD(+) site. Arg83 and Arg89 together coordinate substrate. NAD(+) is bound by residues Asn96 and 119–121 (ITN). 2 residues coordinate substrate: Asn121 and Arg152. The Proton acceptor role is filled by His176.

It belongs to the LDH/MDH superfamily. MDH type 3 family.

It carries out the reaction (S)-malate + NAD(+) = oxaloacetate + NADH + H(+). Functionally, catalyzes the reversible oxidation of malate to oxaloacetate. This is Malate dehydrogenase from Paramagnetospirillum magneticum (strain ATCC 700264 / AMB-1) (Magnetospirillum magneticum).